A 473-amino-acid polypeptide reads, in one-letter code: Proton-coupled folate transporter (473 aa).

Residues 1–20 (MAAPSDPPTAATPPAPPPPA) are compositionally biased toward pro residues. The tract at residues 1–21 (MAAPSDPPTAATPPAPPPPAR) is disordered. Residues 1–29 (MAAPSDPPTAATPPAPPPPARRCLLAPSV) are Cytoplasmic-facing. Residues 30–48 (EPLLFLATLALGLQVPLAT) traverse the membrane as a helical segment. Over 49-90 (QYLWDRLGAERGYVGPNASSPHGCGNGSGAVDPLREEVEALV) the chain is Extracellular. 2 N-linked (GlcNAc...) asparagine glycosylation sites follow: Asn65 and Asn74. Cys72 and Cys306 are oxidised to a cystine. A helical membrane pass occupies residues 91–116 (AHWNLCINLGGFFVGLFSVTLFGPWS). Asn98 is a pemetrexed binding site. Residues 117 to 120 (DSVG) lie on the Cytoplasmic side of the membrane. A helical membrane pass occupies residues 121 to 143 (RRPVLVLPAVGMAVQAAVYLLVM). At 144–148 (YLRLH) the chain is on the extracellular side. A helical transmembrane segment spans residues 149–162 (VAYLLLGRIISGLL). At 163–185 (GDYNLILAGCFASVADSSNQRTR) the chain is on the cytoplasmic side. H(+)-binding residues include Asp164 and Glu193. Residues 186–211 (TFRVAILEACLGVAGMVASVGGGQWR) traverse the membrane as a helical segment. Glu193 serves as a coordination point for pemetrexed. Topologically, residues 212 to 216 (KAEGY) are extracellular. Residues 217–235 (INPFWLVLAASLAAALYAA) traverse the membrane as a helical segment. The Cytoplasmic segment spans residues 236 to 274 (LCLQETVKQRRAAKLLTLQHYKAVYKLYTAPEDLSSRRK). Residues 275-297 (LALYSLAFFLLVTVHFGTKDLYV) form a helical membrane-spanning segment. Residue His289 participates in H(+) binding. Residues 298 to 310 (LYELGSPLCWASD) lie on the Extracellular side of the membrane. A helical transmembrane segment spans residues 311–333 (LIGYGSAASYLAYLSSLGGLRLL). Tyr323 contacts pemetrexed. At 334-339 (QLCLED) the chain is on the cytoplasmic side. A helical membrane pass occupies residues 340–359 (TWVAEIGLISNIAGLVVISL). Residues 360–363 (ATTT) lie on the Extracellular side of the membrane. A helical membrane pass occupies residues 364 to 384 (PLMFTGYGIMFLSMAATPVIR). The Cytoplasmic portion of the chain corresponds to 385 to 396 (AKLSKLVGETEQ). The helical transmembrane segment at 397-422 (GALFASVACVEGLCSLVATGVFNSLY) threads the bilayer. Glu407 and Ser411 together coordinate pemetrexed. Residues 423 to 430 (PSTLHFMR) lie on the Extracellular side of the membrane. The chain crosses the membrane as a helical span at residues 431-449 (GFPFLFGAILLLIPAAIMG). Residues 450–473 (WIEIQDSNLQYSHFSDASSSPADG) are Cytoplasmic-facing.

It belongs to the major facilitator superfamily. SLC46A family. In terms of assembly, monomer. As to expression, widely expressed, including brain, aorta, liver, kidney, spleen, small intestine, pancreas, ovary and testis.

Its subcellular location is the cell membrane. The protein localises to the apical cell membrane. It is found in the basolateral cell membrane. The protein resides in the endosome membrane. It localises to the cytoplasm. The enzyme catalyses folate(in) + H(+)(in) = folate(out) + H(+)(out). It catalyses the reaction (6S)-5-methyl-5,6,7,8-tetrahydrofolate(in) + H(+)(in) = (6S)-5-methyl-5,6,7,8-tetrahydrofolate(out) + H(+)(out). The catalysed reaction is methotrexate(in) + H(+)(in) = methotrexate(out) + H(+)(out). It carries out the reaction pemetrexed(in) + H(+)(in) = pemetrexed(out) + H(+)(out). Its function is as follows. Proton-coupled folate symporter that mediates folate absorption using an H(+) gradient as a driving force. Involved in the intestinal absorption of folates at the brush-border membrane of the proximal jejunum, and the transport from blood to cerebrospinal fluid across the choroid plexus. Functions at acidic pH via alternate outward- and inward-open conformation states. Protonation of residues in the outward open state primes the protein for transport. Binding of folate promotes breaking of salt bridge network and subsequent closure of the extracellular gate, leading to the inward-open state and release of protons and folate. Also able to transport antifolate drugs, such as methotrexate and pemetrexed. Also acts as a lower-affinity, pH-independent heme carrier protein and constitutes the main importer of heme in the intestine. Imports heme in the retina and retinal pigment epithelium, in neurons of the hippocampus, in hepatocytes and in the renal epithelial cells. The sequence is that of Proton-coupled folate transporter from Gallus gallus (Chicken).